Reading from the N-terminus, the 457-residue chain is 6-phosphofructo-2-kinase/fructose-2,6-bisphosphatase (457 aa).

The segment at 1–20 is disordered; it reads MEIPPGLETTKRKVAHSDEH. A 6-phosphofructo-2-kinase region spans residues 1 to 244; sequence MEIPPGLETT…VYFLMNIHLL (244 aa). The segment covering 9–20 has biased composition (basic and acidic residues); sequence TTKRKVAHSDEH. 36 to 44 contacts ATP; the sequence is GLPARGKTY. R69 and R98 together coordinate beta-D-fructose 6-phosphate. The active site involves D124. Residues T126 and R132 each coordinate beta-D-fructose 6-phosphate. C154 is a catalytic residue. 163 to 168 lines the ATP pocket; that stretch reads NVTDVK. K168, R190, and Y194 together coordinate beta-D-fructose 6-phosphate. The tract at residues 245-457 is fructose-2,6-bisphosphatase; that stretch reads PRSIYLTRHG…QLPLCDSPRD (213 aa). A beta-D-fructose 2,6-bisphosphate-binding site is contributed by R252. Residue H253 is the Tele-phosphohistidine intermediate of the active site. Beta-D-fructose 2,6-bisphosphate-binding residues include N259 and G265. E324 acts as the Proton donor/acceptor in catalysis. Residues Y335, R349, K353, Y364, Q390, and R394 each coordinate beta-D-fructose 2,6-bisphosphate. ATP is bound at residue 346–349; it reads ADDR. ATP is bound by residues 390–394 and Y426; that span reads QAVLR.

This sequence in the C-terminal section; belongs to the phosphoglycerate mutase family.

It carries out the reaction beta-D-fructose 2,6-bisphosphate + H2O = beta-D-fructose 6-phosphate + phosphate. It catalyses the reaction beta-D-fructose 6-phosphate + ATP = beta-D-fructose 2,6-bisphosphate + ADP + H(+). Synthesis and degradation of fructose 2,6-bisphosphate. The sequence is that of 6-phosphofructo-2-kinase/fructose-2,6-bisphosphatase from Caenorhabditis elegans.